The chain runs to 197 residues: Short chain dehydrogenase ausX (197 aa).

NADP(+) is bound by residues isoleucine 49, aspartate 95, arginine 157, and tyrosine 189. Tyrosine 189 (proton acceptor) is an active-site residue. Tyrosine 189 acts as the Proton donor in catalysis.

This sequence belongs to the short-chain dehydrogenases/reductases (SDR) family.

The protein operates within secondary metabolite biosynthesis; terpenoid biosynthesis. Functionally, short chain dehydrogenase; part of the gene cluster A that mediates the biosynthesis of austinol and dehydroaustinol, two fungal meroterpenoids. The first step of the pathway is the synthesis of 3,5-dimethylorsellinic acid by the polyketide synthase ausA. 3,5-dimethylorsellinic acid is then prenylated by the polyprenyl transferase ausN. Further epoxidation by the FAD-dependent monooxygenase ausM and cyclization by the probable terpene cyclase ausL lead to the formation of protoaustinoid A. Protoaustinoid A is then oxidized to spiro-lactone preaustinoid A3 by the combined action of the FAD-binding monooxygenases ausB and ausC, and the dioxygenase ausE. Acid-catalyzed keto-rearrangement and ring contraction of the tetraketide portion of preaustinoid A3 by ausJ lead to the formation of preaustinoid A4. The aldo-keto reductase ausK, with the help of ausH, is involved in the next step by transforming preaustinoid A4 into isoaustinone which is in turn hydroxylated by the P450 monooxygenase ausI to form austinolide. Finally, the cytochrome P450 monooxygenase ausG modifies austinolide to austinol. Austinol can be further modified to dehydroaustinol which forms a diffusible complex with diorcinol that initiates conidiation. Due to genetic rearrangements of the clusters and the subsequent loss of some enzymes, the end products of the Emericella nidulans austinoid biosynthesis clusters are austinol and dehydroaustinol, even if additional enzymes, such as the O-acetyltransferase ausQ and the cytochrome P450 monooxygenase ausR are still functional. The polypeptide is Short chain dehydrogenase ausX (Emericella nidulans (strain FGSC A4 / ATCC 38163 / CBS 112.46 / NRRL 194 / M139) (Aspergillus nidulans)).